Reading from the N-terminus, the 236-residue chain is Pyridoxine 5'-phosphate synthase (236 aa).

Asn6 contributes to the 3-amino-2-oxopropyl phosphate binding site. 8 to 9 (DH) lines the 1-deoxy-D-xylulose 5-phosphate pocket. Position 17 (Arg17) interacts with 3-amino-2-oxopropyl phosphate. The active-site Proton acceptor is the His42. The 1-deoxy-D-xylulose 5-phosphate site is built by Arg44 and His49. Catalysis depends on Glu69, which acts as the Proton acceptor. 1-deoxy-D-xylulose 5-phosphate is bound at residue Thr99. The active-site Proton donor is His190. 3-amino-2-oxopropyl phosphate-binding positions include Gly191 and 212–213 (GH).

It belongs to the PNP synthase family. As to quaternary structure, homooctamer; tetramer of dimers.

It localises to the cytoplasm. The catalysed reaction is 3-amino-2-oxopropyl phosphate + 1-deoxy-D-xylulose 5-phosphate = pyridoxine 5'-phosphate + phosphate + 2 H2O + H(+). Its pathway is cofactor biosynthesis; pyridoxine 5'-phosphate biosynthesis; pyridoxine 5'-phosphate from D-erythrose 4-phosphate: step 5/5. Its function is as follows. Catalyzes the complicated ring closure reaction between the two acyclic compounds 1-deoxy-D-xylulose-5-phosphate (DXP) and 3-amino-2-oxopropyl phosphate (1-amino-acetone-3-phosphate or AAP) to form pyridoxine 5'-phosphate (PNP) and inorganic phosphate. The sequence is that of Pyridoxine 5'-phosphate synthase from Pelodictyon phaeoclathratiforme (strain DSM 5477 / BU-1).